The following is a 276-amino-acid chain: Protein canopy homolog 3 (276 aa).

The signal sequence occupies residues Met-1–Ala-16. In terms of domain architecture, Saposin B-type spans Asn-30 to Leu-269. 3 disulfide bridges follow: Cys-32/Cys-190, Cys-35/Cys-178, and Cys-88/Cys-150. Residues Asn-137 to Glu-162 are a coiled coil. Residues Ala-206 to Leu-276 are disordered. Basic residues-rich tracts occupy residues Lys-210–Gly-219 and Lys-228–Ser-239. The segment covering Lys-240–Glu-252 has biased composition (basic and acidic residues).

It belongs to the canopy family.

The protein localises to the endoplasmic reticulum. In terms of biological role, toll-like receptor (TLR)-specific co-chaperone for HSP90B1. Required for proper TLR folding and hence controls TLR exit from the endoplasmic reticulum. Consequently, required for immune responses. The polypeptide is Protein canopy homolog 3 (cnpy3) (Danio rerio (Zebrafish)).